The primary structure comprises 484 residues: PTS system N-acetylmuramic acid-specific EIIBC component (484 aa).

A PTS EIIB type-1 domain is found at 1–89 (MAKITTSMIQ…NEMMEGEEDN (89 aa)). The Phosphocysteine intermediate; for EIIB activity role is filled by C28. The disordered stretch occupies residues 83-106 (MEGEEDNSASTTAESRDLKDVASE). The span at 96–106 (ESRDLKDVASE) shows a compositional bias: basic and acidic residues. Residues 124–484 (SKFATIFTPL…FFGTKNVDLS (361 aa)) form the PTS EIIC type-1 domain. The next 10 helical transmembrane spans lie at 126–146 (FATIFTPLIPGFIAAGLLLGF), 168–188 (LILYMKVFSKGLFSFLSILIG), 194–214 (AFGGSGVNGAILASLFVLGYN), 232–252 (GIDPRGNIIGVLIAAIIGAGV), 273–293 (TLLIMGAVTFVVIMPIGGVLF), 312–332 (ILAGLFLISVMFGIHQGFVPV), 345–365 (LFPILAMAGAGQVGAALALYA), 379–399 (GSIIPGFLGIGEPLIYGVTLP), 404–424 (FITACVGGAAGGFFIGLVSYM), and 451–471 (IFAGMLVFAAGLVISYVAGFL).

The protein resides in the cell inner membrane. It catalyses the reaction N-acetyl-beta-D-muramate(out) + N(pros)-phospho-L-histidyl-[protein] = N-acetyl-beta-D-muramate 6-phosphate(in) + L-histidyl-[protein]. Its function is as follows. The phosphoenolpyruvate-dependent sugar phosphotransferase system (sugar PTS), a major carbohydrate active transport system, catalyzes the phosphorylation of incoming sugar substrates concomitantly with their translocation across the cell membrane. This system is involved in N-acetylmuramic acid (MurNAc) transport, yielding cytoplasmic MurNAc-6-P. Is also able to take up anhydro-N-acetylmuramic acid (anhMurNAc), but cannot phosphorylate the carbon 6, probably because of the 1,6-anhydro ring. This chain is PTS system N-acetylmuramic acid-specific EIIBC component (murP), found in Aliivibrio fischeri (strain ATCC 700601 / ES114) (Vibrio fischeri).